A 262-amino-acid chain; its full sequence is Spindlin-W (262 aa).

Residues 1-49 are disordered; it reads MKTPFGKSPAQRSRADAGHTRVSASMMKKRTSHKKHRNNVGPSKPISQP. Residues 27–38 show a composition bias toward basic residues; the sequence is MKKRTSHKKHRN.

This sequence belongs to the SPIN/STSY family. In terms of tissue distribution, expressed predominantly in ovarian granulosa and thecal cell.

It localises to the nucleus. May play a role in mitosis. This Gallus gallus (Chicken) protein is Spindlin-W (SPINW).